The chain runs to 145 residues: Flagellar assembly factor FliW (145 aa).

This sequence belongs to the FliW family. Interacts with translational regulator CsrA and flagellin(s).

Its subcellular location is the cytoplasm. In terms of biological role, acts as an anti-CsrA protein, binds CsrA and prevents it from repressing translation of its target genes, one of which is flagellin. Binds to flagellin and participates in the assembly of the flagellum. This is Flagellar assembly factor FliW from Thermosipho africanus (strain TCF52B).